The chain runs to 252 residues: Imidazole glycerol phosphate synthase subunit HisF (252 aa).

Catalysis depends on residues D11 and D130.

The protein belongs to the HisA/HisF family. Heterodimer of HisH and HisF.

The protein localises to the cytoplasm. The enzyme catalyses 5-[(5-phospho-1-deoxy-D-ribulos-1-ylimino)methylamino]-1-(5-phospho-beta-D-ribosyl)imidazole-4-carboxamide + L-glutamine = D-erythro-1-(imidazol-4-yl)glycerol 3-phosphate + 5-amino-1-(5-phospho-beta-D-ribosyl)imidazole-4-carboxamide + L-glutamate + H(+). Its pathway is amino-acid biosynthesis; L-histidine biosynthesis; L-histidine from 5-phospho-alpha-D-ribose 1-diphosphate: step 5/9. Its function is as follows. IGPS catalyzes the conversion of PRFAR and glutamine to IGP, AICAR and glutamate. The HisF subunit catalyzes the cyclization activity that produces IGP and AICAR from PRFAR using the ammonia provided by the HisH subunit. In Bacillus cereus (strain AH820), this protein is Imidazole glycerol phosphate synthase subunit HisF.